We begin with the raw amino-acid sequence, 353 residues long: 41 kDa protein (353 aa).

A disordered region spans residues 132–197 (QSSHASALEQ…DNNSSDTIKD (66 aa)). Over residues 157–169 (LDNKGKSDSENCN) the composition is skewed to basic and acidic residues.

This Lactobacillus helveticus (Lactobacillus suntoryeus) protein is 41 kDa protein.